A 228-amino-acid chain; its full sequence is Prolactin (228 aa).

Positions 1–29 (MGTKRSSLKGSLLLLLLMSSLFLFKSVES) are cleaved as a signal peptide. Cysteines 33 and 40 form a disulfide. A phosphoserine mark is found at Ser55, Ser63, and Ser119. 2 disulfides stabilise this stretch: Cys87/Cys203 and Cys220/Cys228.

It belongs to the somatotropin/prolactin family. As to quaternary structure, interacts with PRLR.

It localises to the secreted. In terms of biological role, prolactin acts primarily on the mammary gland by promoting lactation, mammogenesis, mitogenesis and osmoregulation. The sequence is that of Prolactin (PRL) from Trichosurus vulpecula (Brush-tailed possum).